A 384-amino-acid polypeptide reads, in one-letter code: Glucans biosynthesis protein C (384 aa).

Transmembrane regions (helical) follow at residues 17 to 37 (AWLM…THSW), 54 to 74 (FIHA…SYML), 91 to 111 (VGIP…ILLQ), 140 to 160 (LWFL…FTWF), 173 to 193 (AISL…YAAI), 212 to 232 (FIVM…LAFI), 240 to 260 (FTTP…AYLL), 274 to 294 (TESV…FSLG), 311 to 331 (ASLF…AYIT), and 338 to 358 (LIGF…LYEI).

Belongs to the acyltransferase 3 family. OpgC subfamily.

The protein resides in the cell membrane. It participates in glycan metabolism; osmoregulated periplasmic glucan (OPG) biosynthesis. Its function is as follows. Necessary for the succinyl substitution of periplasmic glucans. Could catalyze the transfer of succinyl residues from the cytoplasmic side of the membrane to the nascent glucan backbones on the periplasmic side of the membrane. This Salmonella choleraesuis (strain SC-B67) protein is Glucans biosynthesis protein C.